The following is a 95-amino-acid chain: Signal recognition particle 19 kDa protein (95 aa).

This sequence belongs to the SRP19 family. Part of the signal recognition particle protein translocation system, which is composed of SRP and FtsY. Archaeal SRP consists of a 7S RNA molecule of 300 nucleotides and two protein subunits: SRP54 and SRP19.

It is found in the cytoplasm. Functionally, involved in targeting and insertion of nascent membrane proteins into the cytoplasmic membrane. Binds directly to 7S RNA and mediates binding of the 54 kDa subunit of the SRP. In Staphylothermus marinus (strain ATCC 43588 / DSM 3639 / JCM 9404 / F1), this protein is Signal recognition particle 19 kDa protein.